A 67-amino-acid polypeptide reads, in one-letter code: Medusin-PT (67 aa).

A signal peptide spans 1–22; that stretch reads MAFLKKSLFLVFFLGFVSLSIC. Residues 23–48 constitute a propeptide that is removed on maturation; that stretch reads EEEKRETDEKENEQEDDREERSEEKR. The interval 25 to 46 is disordered; sequence EKRETDEKENEQEDDREERSEE. Acidic residues predominate over residues 31–40; sequence EKENEQEDDR. Residue leucine 66 is modified to Leucine amide.

The protein belongs to the frog skin active peptide (FSAP) family. Medusin subfamily. Post-translationally, in the synthetic mutant medusin-PT1a [T58K], the Leu-50 has been modified in a D-amino acid. In medusin-PT1a, there is an increase in antimicrobial activity, and an increase in hemolytic activity. It is more potent against S.aureus and gains activity against MRSA, E.faecalis, E.coli, P.aeruginosa and C.albicans. There is an important increase in both biofilm inhibition and biofilm eradication. As to expression, expressed by the skin glands.

The protein localises to the secreted. The protein resides in the target cell membrane. Functionally, antimicrobial peptide with activity against Gram-positive bacteria S.epidermidis ATCC 12228 (MIC=50 uM) and S.aureus (MIC=64 ug/ml and MBC=128 ug/ml). Not active against some Gram-positive bacteria (methicillin-resistant S.aureus (MRSA), E.faecalis), Gram-negative bacterium E.coli ATCC 25922 and fungus C.albicans at concentrations up to 100 uM. Can only slightly inhibit the formation of biofilm by S.aureus (minimal biofilm inhibitionconcentration MBIC=512 ug/ml, minimal biofilm eradication concentration MBEC&gt;512 ug/ml). Has an anti-inflammatory effect, since it inhibits the production of the pro-inflammatory cytokines TNF-alpha and IL-1beta. Has high activity of stimulation of insulin release, which may protect the species from being eaten by predators by causing fatal hypoglycemia. Is not cytotoxic to cancer line cells. Shows very low hemolysis on horse erythrocytes and moderate hemolysis on mouse erythrocytes. This chain is Medusin-PT, found in Phyllomedusa tarsius (Brownbelly leaf frog).